We begin with the raw amino-acid sequence, 297 residues long: MGVREKDPLAQLSLPPGFRFYPTDEELLVQYLCRKVAGYHFSLQVIGDIDLYKFDPWDLPSKALFGEKEWYFFSPRDRKYPNGSRPNRVAGSGYWKATGTDKIITADGRRVGIKKALVFYAGKAPKGTKTNWIMHEYRLIEHSRSHGSSKLDDWVLCRIYKKTSGSQRQAVTPVQACREEHSTNGSSSSSSSQLDDVLDSFPEIKDQSFNLPRMNSLRTILNGNFDWASLAGLNPIPELAPTNGLPSYGGYDAFRAAEGEAESGHVNRQQNSSGLTQSFGYSSSGFGVSGQTFEFRQ.

The 149-residue stretch at 14 to 162 (LPPGFRFYPT…DWVLCRIYKK (149 aa)) folds into the NAC domain. A DNA-binding region spans residues 111–168 (VGIKKALVFYAGKAPKGTKTNWIMHEYRLIEHSRSHGSSKLDDWVLCRIYKKTSGSQR). Disordered regions lie at residues 168–195 (RQAV…SQLD) and 259–278 (GEAE…LTQS). Residues 266–277 (VNRQQNSSGLTQ) are compositionally biased toward polar residues.

In terms of tissue distribution, expressed in leaves and in root pericycle and epidermis.

The protein resides in the nucleus. Functionally, transcription factors that bind specifically to the 5'-CATGTG-3' motif and with bipartite regions with 5'-CGTr-3' and 5'-YACG-3' as cores. Involved in the regulation of metabolic reprogramming during senescence by promoting the chloroplast protein degradation and the catabolism of lysine, phytol and free fatty acids via the induction of CV, LKR/SDH and PES1 expression. Also triggers the degradation of starch and the accumulation of mono- and disaccharides during senescence by enhancing the expression of AMY1, SFP1 and SWEET15. This is NAC domain-containing protein 72 from Arabidopsis thaliana (Mouse-ear cress).